A 553-amino-acid polypeptide reads, in one-letter code: Phenylalanine--tRNA ligase beta subunit (553 aa).

A B5 domain is found at Phe273–Pro349. Asp327, Asp333, Asp336, and Asp337 together coordinate Mg(2+).

This sequence belongs to the phenylalanyl-tRNA synthetase beta subunit family. Type 2 subfamily. Tetramer of two alpha and two beta subunits. Mg(2+) is required as a cofactor.

It localises to the cytoplasm. The enzyme catalyses tRNA(Phe) + L-phenylalanine + ATP = L-phenylalanyl-tRNA(Phe) + AMP + diphosphate + H(+). The sequence is that of Phenylalanine--tRNA ligase beta subunit from Methanocella arvoryzae (strain DSM 22066 / NBRC 105507 / MRE50).